Consider the following 241-residue polypeptide: Beta-casein (241 aa).

A signal peptide spans 1 to 15; that stretch reads MKILILACLVALALA. The interval 21–45 is disordered; the sequence is LNVSSETVESLSSNEPDSSSEESIT. Serine 24 is modified (phosphoserine; in form 4-P, form 5-P, form 6-P and form 7-P). The residue at position 25 (serine 25) is a Phosphoserine; in form 7-P. Threonine 27 is modified (phosphothreonine; in form 6-P and form 7-P). 2 positions are modified to phosphoserine: serine 30 and serine 32. The residue at position 33 (serine 33) is a Phosphoserine; in form 5-P, form 6-P and form 7-P. Residues serine 38, serine 39, and serine 40 each carry the phosphoserine; in form 4-P, form 5-P, form 6-P and form 7-P modification. Asparagine 150 bears the Deamidated asparagine mark.

It belongs to the beta-casein family. In terms of processing, there are at least five different forms found in milk, with varying degrees of phosphorylation. These include form 3-P which is phosphorylated at three sites that have not been determined, this form is present in very low amounts, form 4-P which is phosphorylated at four sites, form 5-P which is phosphorylated at five sites, form 6-P which is phosphorylated at six sites, and form 7-P which is phosphorylated at seven sites. Spontaneous deamidation of Asn-150 produces aspartate or isoaspartate. In terms of tissue distribution, mammary gland specific. Secreted in milk.

It is found in the secreted. Important role in determination of the surface properties of the casein micelles. The sequence is that of Beta-casein from Equus caballus (Horse).